The primary structure comprises 225 residues: Heptaprenylglyceryl phosphate synthase (225 aa).

Residue K6 coordinates sn-glycerol 1-phosphate. Positions 8 and 34 each coordinate Mg(2+). Sn-glycerol 1-phosphate is bound by residues 153–158, G183, and 203–204; these read YVEYSG and GN.

The protein belongs to the GGGP/HepGP synthase family. Group I subfamily. As to quaternary structure, homodimer. Mg(2+) serves as cofactor.

The enzyme catalyses sn-glycerol 1-phosphate + all-trans-heptaprenyl diphosphate = 3-heptaprenyl-sn-glycero-1-phosphate + diphosphate. Its pathway is membrane lipid metabolism; glycerophospholipid metabolism. Its function is as follows. Prenyltransferase that catalyzes in vivo the transfer of the heptaprenyl moiety of heptaprenyl pyrophosphate (HepPP; 35 carbon atoms) to the C3 hydroxyl of sn-glycerol-1-phosphate (G1P), producing heptaprenylglyceryl phosphate (HepGP). This reaction is an ether-bond-formation step in the biosynthesis of archaea-type G1P-based membrane lipids found in Bacillales. The sequence is that of Heptaprenylglyceryl phosphate synthase from Listeria monocytogenes serotype 4b (strain CLIP80459).